A 396-amino-acid chain; its full sequence is Elongation factor Tu (396 aa).

One can recognise a tr-type G domain in the interval 10–205 (KPHVNIGTIG…ACDDNIPDPV (196 aa)). Residues 19–26 (GHVDHGKT) form a G1 region. 19–26 (GHVDHGKT) provides a ligand contact to GTP. T26 contributes to the Mg(2+) binding site. A G2 region spans residues 62–66 (GITIN). Residues 83–86 (DAPG) are G3. GTP contacts are provided by residues 83-87 (DAPGH) and 138-141 (NKCD). The interval 138 to 141 (NKCD) is G4. The segment at 175–177 (SAL) is G5.

It belongs to the TRAFAC class translation factor GTPase superfamily. Classic translation factor GTPase family. EF-Tu/EF-1A subfamily. Monomer.

It is found in the cytoplasm. It catalyses the reaction GTP + H2O = GDP + phosphate + H(+). In terms of biological role, GTP hydrolase that promotes the GTP-dependent binding of aminoacyl-tRNA to the A-site of ribosomes during protein biosynthesis. The chain is Elongation factor Tu from Corynebacterium glutamicum (strain R).